The chain runs to 81 residues: Photosystem I iron-sulfur center (81 aa).

4Fe-4S ferredoxin-type domains follow at residues 2–31 (SHSV…MIPW) and 39–68 (IAPA…VRVY). Residues cysteine 11, cysteine 14, cysteine 17, cysteine 21, cysteine 48, cysteine 51, cysteine 54, and cysteine 58 each coordinate [4Fe-4S] cluster.

As to quaternary structure, the eukaryotic PSI reaction center is composed of at least 11 subunits. It depends on [4Fe-4S] cluster as a cofactor.

Its subcellular location is the plastid. It is found in the chloroplast thylakoid membrane. It catalyses the reaction reduced [plastocyanin] + hnu + oxidized [2Fe-2S]-[ferredoxin] = oxidized [plastocyanin] + reduced [2Fe-2S]-[ferredoxin]. In terms of biological role, apoprotein for the two 4Fe-4S centers FA and FB of photosystem I (PSI); essential for photochemical activity. FB is the terminal electron acceptor of PSI, donating electrons to ferredoxin. The C-terminus interacts with PsaA/B/D and helps assemble the protein into the PSI complex. Required for binding of PsaD and PsaE to PSI. PSI is a plastocyanin-ferredoxin oxidoreductase, converting photonic excitation into a charge separation, which transfers an electron from the donor P700 chlorophyll pair to the spectroscopically characterized acceptors A0, A1, FX, FA and FB in turn. This Drimys granadensis protein is Photosystem I iron-sulfur center.